We begin with the raw amino-acid sequence, 485 residues long: Adenosylhomocysteinase (485 aa).

The substrate site is built by Thr-60, Asp-146, and Glu-208. Residue Thr-209–Thr-211 participates in NAD(+) binding. The substrate site is built by Lys-238 and Asp-242. Residues Asn-243, Gly-272–Gly-277, Glu-295, Asn-330, Ile-351–His-353, and Asn-399 each bind NAD(+).

Belongs to the adenosylhomocysteinase family. It depends on NAD(+) as a cofactor.

It localises to the cytoplasm. It carries out the reaction S-adenosyl-L-homocysteine + H2O = L-homocysteine + adenosine. It participates in amino-acid biosynthesis; L-homocysteine biosynthesis; L-homocysteine from S-adenosyl-L-homocysteine: step 1/1. May play a key role in the regulation of the intracellular concentration of adenosylhomocysteine. This chain is Adenosylhomocysteinase, found in Streptomyces griseus subsp. griseus (strain JCM 4626 / CBS 651.72 / NBRC 13350 / KCC S-0626 / ISP 5235).